We begin with the raw amino-acid sequence, 360 residues long: MWKGGNQEAVIEGSGGELGVPGSWGLQDAACHLARASLPIMFPWPLPLGSSALTMLLGALTSLFLWYCYRLGSQDMQALGTGSRAGGVSGMPDVCSQTGPRGLGDSGEGPRAEGLVSRRLRAYARRYSWAGMGRVRRAAQGGSGLTGGAGVMGIQRPGLLFLPDLPSSPFVPRDAQRHDVELLQSSFPAILRDFGAVSWDFSGTTPLPRGWSPPLAPGCYQLLLYQAGRCQPSNCRRCPGAYRALRGLRSFMSANTFGNAGFSVLLPGARLEGRCGPTNARVRCHLGLKIPPGCELVVGGEPQCWAEGHCLLVDDSFLHTVAHNGSPEDGPRVVFIVDLWHPNVAGAERQALDFVFAPDP.

The Cytoplasmic portion of the chain corresponds to 1–45 (MWKGGNQEAVIEGSGGELGVPGSWGLQDAACHLARASLPIMFPWP). A helical membrane pass occupies residues 46–68 (LPLGSSALTMLLGALTSLFLWYC). The Lumenal portion of the chain corresponds to 69 to 360 (YRLGSQDMQA…ALDFVFAPDP (292 aa)).

The protein belongs to the aspartyl/asparaginyl beta-hydroxylase family.

The protein resides in the membrane. The protein is Aspartate beta-hydroxylase domain-containing protein 1 (Asphd1) of Mus musculus (Mouse).